Here is a 117-residue protein sequence, read N- to C-terminus: Transcription elongation factor SPT4 (117 aa).

Ala-2 is modified (N-acetylalanine). The tract at residues 2 to 40 (ALETVPKDLRHLRACLLCSLVKTIDQFEYDGCDNCDAYL) is interaction with SUPT5H. The Zn(2+) site is built by Cys-16, Cys-19, Cys-33, and Cys-36. Residues 16–36 (CLLCSLVKTIDQFEYDGCDNC) form a C4-type zinc finger.

Belongs to the SPT4 family. Interacts with SUPT5H to form DSIF. DSIF interacts with the positive transcription elongation factor b complex (P-TEFb complex), which is composed of CDK9 and cyclin-T (CCNT1 or CCNT2). DSIF interacts with RNA polymerase II, and this interaction is reduced by phosphorylation of the C-terminal domain (CTD) of POLR2A by P-TEFb. DSIF also interacts with the NELF complex, which is composed of NELFA, NELFB, NELFD and NELFE, and this interaction occurs following prior binding of DSIF to RNA polymerase II. DSIF also interacts with PRMT1/HRMT1L2, TATSF1, RNGTT/CAP1A, PRMT5/SKB1, SUPT6H, and can interact with PIN1. Post-translationally, ubiquitinated by UBR5 when not assembled in the DSIF complex, leading to its degradation: UBR5 recognizes and binds a degron that is not accessible when SUPT4H1 is part of the DSIF complex.

It is found in the nucleus. Functionally, component of the DRB sensitivity-inducing factor complex (DSIF complex), which regulates mRNA processing and transcription elongation by RNA polymerase II. DSIF positively regulates mRNA capping by stimulating the mRNA guanylyltransferase activity of RNGTT/CAP1A. DSIF also acts cooperatively with the negative elongation factor complex (NELF complex) to enhance transcriptional pausing at sites proximal to the promoter. Transcriptional pausing may facilitate the assembly of an elongation competent RNA polymerase II complex. DSIF and NELF promote pausing by inhibition of the transcription elongation factor TFIIS/S-II. TFIIS/S-II binds to RNA polymerase II at transcription pause sites and stimulates the weak intrinsic nuclease activity of the enzyme. Cleavage of blocked transcripts by RNA polymerase II promotes the resumption of transcription from the new 3' terminus and may allow repeated attempts at transcription through natural pause sites. This chain is Transcription elongation factor SPT4 (SUPT4H1), found in Pongo abelii (Sumatran orangutan).